Consider the following 507-residue polypeptide: Protein MosB (507 aa).

A DNA-binding region (H-T-H motif) is located at residues 256 to 275; that stretch reads QAHGALYKGQHVGLLSDIGC. N6-(pyridoxal phosphate)lysine is present on lysine 282.

It belongs to the DegT/DnrJ/EryC1 family.

Its function is as follows. Involved in the biosynthesis of the rhizopine 3-O-methyl-scyllo-inosamine. May have a regulatory role in controlling the housekeeping genes within the nodule which are involved in the biosynthesis of the rhizopine backbone. The polypeptide is Protein MosB (mosB) (Rhizobium meliloti (Ensifer meliloti)).